The primary structure comprises 512 residues: ATP synthase subunit alpha (512 aa).

Position 169 to 176 (glycine 169 to threonine 176) interacts with ATP.

This sequence belongs to the ATPase alpha/beta chains family. As to quaternary structure, F-type ATPases have 2 components, CF(1) - the catalytic core - and CF(0) - the membrane proton channel. CF(1) has five subunits: alpha(3), beta(3), gamma(1), delta(1), epsilon(1). CF(0) has three main subunits: a(1), b(2) and c(9-12). The alpha and beta chains form an alternating ring which encloses part of the gamma chain. CF(1) is attached to CF(0) by a central stalk formed by the gamma and epsilon chains, while a peripheral stalk is formed by the delta and b chains.

It is found in the cell inner membrane. The catalysed reaction is ATP + H2O + 4 H(+)(in) = ADP + phosphate + 5 H(+)(out). Produces ATP from ADP in the presence of a proton gradient across the membrane. The alpha chain is a regulatory subunit. The polypeptide is ATP synthase subunit alpha (Rickettsia akari (strain Hartford)).